Here is a 264-residue protein sequence, read N- to C-terminus: uncharacterized protein (264 aa).

3 helical membrane passes run 48–68 (LTIT…LLVF), 112–132 (ITPS…FLLA), and 142–162 (LPIA…SYLI). S260 is modified (phosphoserine).

It is found in the membrane. This is an uncharacterized protein from Schizosaccharomyces pombe (strain 972 / ATCC 24843) (Fission yeast).